The sequence spans 292 residues: 33 kDa chaperonin (292 aa).

2 disulfide bridges follow: Cys236–Cys238 and Cys269–Cys272.

This sequence belongs to the HSP33 family. Post-translationally, under oxidizing conditions two disulfide bonds are formed involving the reactive cysteines. Under reducing conditions zinc is bound to the reactive cysteines and the protein is inactive.

Its subcellular location is the cytoplasm. Functionally, redox regulated molecular chaperone. Protects both thermally unfolding and oxidatively damaged proteins from irreversible aggregation. Plays an important role in the bacterial defense system toward oxidative stress. This Ruminiclostridium cellulolyticum (strain ATCC 35319 / DSM 5812 / JCM 6584 / H10) (Clostridium cellulolyticum) protein is 33 kDa chaperonin.